Consider the following 652-residue polypeptide: Protein phosphatase Slingshot homolog 3 (652 aa).

Positions 1–16 (MALVTVSRSPPASGHS) are enriched in polar residues. Residues 1–31 (MALVTVSRSPPASGHSTPVGPTDRVIRRRGR) form a disordered region. Residue alanine 2 is modified to N-acetylalanine. A phosphoserine mark is found at serine 9, serine 37, serine 85, and serine 87. Residues 43–91 (GAVLGLQDGGEGNDAAEADPEPMEKPSGEEQPAEDQTDNGQGSQSPWKQ) are disordered. A compositionally biased stretch (polar residues) spans 80–90 (DNGQGSQSPWK). The 56-residue stretch at 266-321 (EQMEQAILAELWQVLDASDLDSVTSKEIRQALELRLGCPLQQYRDFIDNQMLLLMA) folds into the DEK-C domain. One can recognise a Tyrosine-protein phosphatase domain in the interval 325–466 (RASRIFPHLY…LQTYQGILTA (142 aa)). Cysteine 410 acts as the Phosphocysteine intermediate in catalysis. Disordered regions lie at residues 484–526 (EPLA…LGLR), 540–580 (LLEP…KGGQ), and 610–652 (RAFQ…EGKA). Residues 540–552 (LLEPSSEPESTTE) are compositionally biased toward low complexity. Basic and acidic residues predominate over residues 642-652 (SVDDSREEGKA).

It belongs to the protein-tyrosine phosphatase family. In terms of assembly, does not bind to, or colocalize with, filamentous actin.

Its subcellular location is the cytoplasm. The protein localises to the cytoskeleton. The protein resides in the nucleus. The enzyme catalyses O-phospho-L-tyrosyl-[protein] + H2O = L-tyrosyl-[protein] + phosphate. The catalysed reaction is O-phospho-L-seryl-[protein] + H2O = L-seryl-[protein] + phosphate. It carries out the reaction O-phospho-L-threonyl-[protein] + H2O = L-threonyl-[protein] + phosphate. Protein phosphatase which may play a role in the regulation of actin filament dynamics. Can dephosphorylate and activate the actin binding/depolymerizing factor cofilin, which subsequently binds to actin filaments and stimulates their disassembly. The sequence is that of Protein phosphatase Slingshot homolog 3 (Ssh3) from Rattus norvegicus (Rat).